The primary structure comprises 642 residues: Threonine--tRNA ligase (642 aa).

Positions 1-61 (MPVITLPDGS…ESDAQLAIIT (61 aa)) constitute a TGS domain. The catalytic stretch occupies residues 243–534 (DHRKIGKQLD…LTEEYAGFFP (292 aa)). The Zn(2+) site is built by C334, H385, and H511.

It belongs to the class-II aminoacyl-tRNA synthetase family. Homodimer. Zn(2+) is required as a cofactor.

Its subcellular location is the cytoplasm. The catalysed reaction is tRNA(Thr) + L-threonine + ATP = L-threonyl-tRNA(Thr) + AMP + diphosphate + H(+). Catalyzes the attachment of threonine to tRNA(Thr) in a two-step reaction: L-threonine is first activated by ATP to form Thr-AMP and then transferred to the acceptor end of tRNA(Thr). Also edits incorrectly charged L-seryl-tRNA(Thr). This Yersinia enterocolitica serotype O:8 / biotype 1B (strain NCTC 13174 / 8081) protein is Threonine--tRNA ligase.